Consider the following 716-residue polypeptide: Protein C-mannosyl-transferase DPY19L3 (716 aa).

The Cytoplasmic segment spans residues 1–43 (MMSIRQRREIRATEVSEDFPAQEENVKLENKLPSGCTSRRLWK). A helical transmembrane segment spans residues 44 to 64 (ILSLTIGGTIALCIGLLTSVY). The Lumenal segment spans residues 65–154 (LATLHENDLW…RVLPVQKYLE (90 aa)). A glycan (N-linked (GlcNAc...) asparagine) is linked at N118. Residues 155-182 (PVYFYIYTLFGLQAIYVTALYITSWLLS) form a helical membrane-spanning segment. The Cytoplasmic portion of the chain corresponds to 183–184 (GT). The name=3 intramembrane region spans 185 to 197 (WLSGLLAAFWYVT). Residues 198-215 (NRIDTTRVEFTIPLRENW) lie on the Cytoplasmic side of the membrane. Residues 216-230 (ALPFFAIQIAAITYF) constitute an intramembrane region (name=4). Residues 231–239 (LRPNLQPLS) lie on the Cytoplasmic side of the membrane. The helical transmembrane segment at 240-256 (ERLTLLAIFISTFLFSL) threads the bilayer. The Lumenal segment spans residues 257–262 (TWQFNQ). A helical transmembrane segment spans residues 263 to 279 (FMMLMQALVLFTLDSLD). Topologically, residues 280–289 (MLPAVKATWL) are cytoplasmic. The chain crosses the membrane as a helical span at residues 290–306 (YGIQITSLLLVCILQFF). At 307 to 308 (NS) the chain is on the lumenal side. The chain crosses the membrane as a helical span at residues 309-323 (MILGSLLISFNLSVF). Residues 324–338 (IARKLQKNLKTGSFL) lie on the Cytoplasmic side of the membrane. A helical transmembrane segment spans residues 339–359 (NRLGKLLLHLFMVLCLTLFLN). Topologically, residues 360–414 (NIIKKILNLKSDEHIFKFLKAKFGLGATRDFDANLYLCEEAFGLLPFNTFGRLSD) are lumenal. A helical transmembrane segment spans residues 415–437 (TLLFYAYIFVLSITVIVAFVVAF). The Cytoplasmic segment spans residues 438–465 (HNLSDSTNQQSVGKMEKGTVDLKPETAY). Residues 466 to 485 (NLIHTILFGFLALSTMRMKY) form a helical membrane-spanning segment. Residues 486–487 (LW) are Lumenal-facing. Residues 488–499 (TSHMCVFASFGL) form a helical membrane-spanning segment. The Cytoplasmic segment spans residues 500 to 522 (CSPEIWELLLKSVHLYNPKRICI). A helical membrane pass occupies residues 523-539 (MRYSVPILILLYLCYKF). Topologically, residues 540–716 (WPGMMDELSE…FHVYKLSRNK (177 aa)) are lumenal. N704 is a glycosylation site (N-linked (GlcNAc...) asparagine).

The protein belongs to the dpy-19 family.

The protein resides in the endoplasmic reticulum membrane. It catalyses the reaction L-tryptophyl-[protein] + a di-trans,poly-cis-dolichyl beta-D-mannosyl phosphate = C-alpha-D-mannosyl-L-tryptophyl-[protein] + a di-trans,poly-cis-dolichyl phosphate + H(+). It functions in the pathway protein modification; protein glycosylation. In terms of biological role, C-mannosyltransferase that mediates C-mannosylation of tryptophan residues on target proteins. The reaction occurs on the luminal side of the endoplasmic reticulum and involves the transfer of a mannose unit from a dolichylphosphate mannose (Dol-P-Man) donor to an acceptor protein containing a WxxW or WxxC consensus sequence. C-mannosylates RSPO1, a Wnt signaling regulator, preferentially at the first Trp residue in the sequence WxxW. C-mannosylates the netrin receptor UNC5A, preferentially at the third tryptophan of WxxWxxWxxC sequence. This Pongo abelii (Sumatran orangutan) protein is Protein C-mannosyl-transferase DPY19L3 (DPY19L3).